The chain runs to 565 residues: Dihydroxy-acid dehydratase (565 aa).

Aspartate 80 lines the Mg(2+) pocket. Position 121 (cysteine 121) interacts with [2Fe-2S] cluster. Residues aspartate 122 and lysine 123 each contribute to the Mg(2+) site. N6-carboxylysine is present on lysine 123. Position 194 (cysteine 194) interacts with [2Fe-2S] cluster. Mg(2+) is bound at residue glutamate 447. The active-site Proton acceptor is the serine 473.

The protein belongs to the IlvD/Edd family. As to quaternary structure, homodimer. Requires [2Fe-2S] cluster as cofactor. Mg(2+) serves as cofactor.

It carries out the reaction (2R)-2,3-dihydroxy-3-methylbutanoate = 3-methyl-2-oxobutanoate + H2O. The enzyme catalyses (2R,3R)-2,3-dihydroxy-3-methylpentanoate = (S)-3-methyl-2-oxopentanoate + H2O. It functions in the pathway amino-acid biosynthesis; L-isoleucine biosynthesis; L-isoleucine from 2-oxobutanoate: step 3/4. It participates in amino-acid biosynthesis; L-valine biosynthesis; L-valine from pyruvate: step 3/4. Its function is as follows. Functions in the biosynthesis of branched-chain amino acids. Catalyzes the dehydration of (2R,3R)-2,3-dihydroxy-3-methylpentanoate (2,3-dihydroxy-3-methylvalerate) into 2-oxo-3-methylpentanoate (2-oxo-3-methylvalerate) and of (2R)-2,3-dihydroxy-3-methylbutanoate (2,3-dihydroxyisovalerate) into 2-oxo-3-methylbutanoate (2-oxoisovalerate), the penultimate precursor to L-isoleucine and L-valine, respectively. This chain is Dihydroxy-acid dehydratase, found in Pelodictyon phaeoclathratiforme (strain DSM 5477 / BU-1).